We begin with the raw amino-acid sequence, 496 residues long: Glutelin type-A 3 (496 aa).

Positions 1 to 24 (MATIKFPIVFSVVCLFLLCNGSLA) are cleaved as a signal peptide. 2 disulfides stabilise this stretch: cysteine 45–cysteine 78 and cysteine 121–cysteine 312. 2 consecutive Cupin type-1 domains span residues 50–248 (LQAF…GVAR) and 318–467 (QNID…EEAR).

This sequence belongs to the 11S seed storage protein (globulins) family. As to quaternary structure, hexamer; each subunit is composed of an acidic and a basic chain derived from a single precursor and linked by a disulfide bond.

Seed storage protein. In Oryza sativa subsp. japonica (Rice), this protein is Glutelin type-A 3 (GLUA3).